The sequence spans 805 residues: Leucine--tRNA ligase (805 aa).

The 'HIGH' region signature appears at 40–51; sequence PYPSGSGLHVGH. The 'KMSKS' region signature appears at 576 to 580; that stretch reads KMSKS. ATP is bound at residue K579.

It belongs to the class-I aminoacyl-tRNA synthetase family.

The protein localises to the cytoplasm. It catalyses the reaction tRNA(Leu) + L-leucine + ATP = L-leucyl-tRNA(Leu) + AMP + diphosphate. The sequence is that of Leucine--tRNA ligase from Chlorobium chlorochromatii (strain CaD3).